Here is a 104-residue protein sequence, read N- to C-terminus: Membrane magnesium transporter (104 aa).

At 1 to 2 (MN) the chain is on the cytoplasmic side. The helical transmembrane segment at 3–23 (LGFLVGVFGVLILSHAAYSTI) threads the bilayer. At 24–40 (QYRGLLKIMEEEFSRPP) the chain is on the lumenal side. The helical transmembrane segment at 41 to 61 (INVILELIIGLALCMWAALTF) threads the bilayer. Topologically, residues 62–104 (PGKFLSIHPDSDENRAVFLPDNSDFMIFNHRGRLFPPQIDMKF) are cytoplasmic.

It belongs to the membrane magnesium transporter (TC 1.A.67) family. As to quaternary structure, component of the ER membrane protein complex (EMC).

The protein resides in the endoplasmic reticulum membrane. It localises to the golgi apparatus membrane. It is found in the early endosome membrane. Its function is as follows. Mediates Mg(2+) transport. The sequence is that of Membrane magnesium transporter from Arabidopsis thaliana (Mouse-ear cress).